Here is a 351-residue protein sequence, read N- to C-terminus: Spermidine/putrescine import ATP-binding protein PotA (351 aa).

Residues 6–236 (LELRNVTKEY…PENAWVANFI (231 aa)) form the ABC transporter domain. Residue 38–45 (GPSGCGKT) coordinates ATP.

It belongs to the ABC transporter superfamily. Spermidine/putrescine importer (TC 3.A.1.11.1) family. In terms of assembly, the complex is composed of two ATP-binding proteins (PotA), two transmembrane proteins (PotB and PotC) and a solute-binding protein (PotD).

Its subcellular location is the cell membrane. It carries out the reaction ATP + H2O + polyamine-[polyamine-binding protein]Side 1 = ADP + phosphate + polyamineSide 2 + [polyamine-binding protein]Side 1.. Functionally, part of the ABC transporter complex PotABCD involved in spermidine/putrescine import. Responsible for energy coupling to the transport system. The polypeptide is Spermidine/putrescine import ATP-binding protein PotA (Mycoplasma mycoides subsp. mycoides SC (strain CCUG 32753 / NCTC 10114 / PG1)).